Reading from the N-terminus, the 532-residue chain is Tegument protein UL21 (532 aa).

The disordered stretch occupies residues 251–276 (SPSVSSAPPPSAPDASLPPPGLQEAA). Residues 257-276 (APPPSAPDASLPPPGLQEAA) are compositionally biased toward pro residues.

It belongs to the alphaherpesvirinae UL21 protein family. Interacts (via C-terminus) with UL16.

The protein resides in the virion tegument. It localises to the host cytoplasm. Its subcellular location is the host nucleus. May participate in DNA packaging/capsid maturation events. Promotes efficient incorporation of tegument proteins UL46, UL49, and US3 into virions. May also play a role in capsid transport to the trans-Golgi network (TGN). This chain is Tegument protein UL21, found in Human herpesvirus 2 (strain HG52) (HHV-2).